Consider the following 118-residue polypeptide: UPF0102 protein NE0719 (118 aa).

It belongs to the UPF0102 family.

The polypeptide is UPF0102 protein NE0719 (Nitrosomonas europaea (strain ATCC 19718 / CIP 103999 / KCTC 2705 / NBRC 14298)).